A 501-amino-acid chain; its full sequence is DELTA-alicitoxin-Pse2a (501 aa).

The N-terminal stretch at 1–22 is a signal peptide; sequence MSPYFKLSSALIFLAITMEALC. Positions 23-35 are excised as a propeptide; sequence SPIENTSTSNKDN. Residues 23–359 enclose the MACPF domain; the sequence is SPIENTSTSN…GFLHFGCSYL (337 aa). Residues 135 to 159 are a coiled coil; sequence AAVTNNIASSEEEVQGLSLNLKAYS. The 35-residue stretch at 388–422 folds into the EGF-like domain; sequence VCKVGPEGCQHHEDCHYRAAFWCECGGPYDLARTC. 3 cysteine pairs are disulfide-bonded: C389/C402, C396/C410, and C412/C422.

The protein resides in the secreted. The protein localises to the nematocyst. Causes lethal toxicity to the shrimp Palaemon paucidence, and hemolytic activity toward sheep red blood cells. This is DELTA-alicitoxin-Pse2a from Phyllodiscus semoni (Night anemone).